A 78-amino-acid polypeptide reads, in one-letter code: Ubiquitin-like protein 1 (78 aa).

It belongs to the ubiquitin family.

The protein is Ubiquitin-like protein 1 (ubl1) of Schizosaccharomyces pombe (strain 972 / ATCC 24843) (Fission yeast).